A 506-amino-acid polypeptide reads, in one-letter code: Maturase K (506 aa).

This sequence belongs to the intron maturase 2 family. MatK subfamily.

The protein resides in the plastid. It localises to the chloroplast. In terms of biological role, usually encoded in the trnK tRNA gene intron. Probably assists in splicing its own and other chloroplast group II introns. This chain is Maturase K, found in Trifolium lupinaster (Lupine clover).